A 754-amino-acid polypeptide reads, in one-letter code: Glutathione biosynthesis bifunctional protein GshAB (754 aa).

The segment at 1 to 332 (MTLNQLLQKL…QGHALNEKIA (332 aa)) is glutamate--cysteine ligase. The ATP-grasp domain occupies 488–746 (KKILADASFP…ITTKILDKLF (259 aa)). Residue 515–573 (PLIKDKQIVVKPKSTNFGLGISIFQEPASLDNYQKALEIAFAEDTSVLVEEFIPGTEYR) participates in ATP binding. Mg(2+) is bound by residues D695, E716, and N718. D695, E716, and N718 together coordinate Mn(2+).

In the N-terminal section; belongs to the glutamate--cysteine ligase type 1 family. Type 2 subfamily. In terms of assembly, monomer. Requires Mg(2+) as cofactor. Mn(2+) is required as a cofactor.

The catalysed reaction is L-cysteine + L-glutamate + ATP = gamma-L-glutamyl-L-cysteine + ADP + phosphate + H(+). It catalyses the reaction gamma-L-glutamyl-L-cysteine + glycine + ATP = glutathione + ADP + phosphate + H(+). The protein operates within sulfur metabolism; glutathione biosynthesis; glutathione from L-cysteine and L-glutamate: step 1/2. Its pathway is sulfur metabolism; glutathione biosynthesis; glutathione from L-cysteine and L-glutamate: step 2/2. In terms of biological role, synthesizes glutathione from L-glutamate and L-cysteine via gamma-L-glutamyl-L-cysteine. The sequence is that of Glutathione biosynthesis bifunctional protein GshAB from Streptococcus thermophilus (strain ATCC BAA-250 / LMG 18311).